Here is a 592-residue protein sequence, read N- to C-terminus: MRTHYCGNLNKSLAGQTVELCGWVNRRRDLGGLIFIDMRDREGVVQVVVDPDMKDIFPIANQLRNEFCIKFTGEVRVRPDSQVNKDMATGEVELYATGLEIINRSEALPLDFNQTNSEEQRLKYRYIDLRRPEMSDRIKLRARASSFVRRFLDENLFLDIETPVLTKATPEGARDYLVPSRVHKGSFYALPQSPQLFKQLLMMSGFDRYYQIVKCFRDEDLRADRQPEFTQIDIETSFLTSQEVRNVTEKLVHDMWKELLDVELGQFPVMPFSEAIRRFGSDKPDLRNPLELVDVADLVKDVEFKVFSGPANDEKGRVAVIRVPGGAKLTRKQIDGYAEHVNIYGAKGLAWMKVNDRAAGMEGIQSPVAKFLSEDVINGILDRTQAESGDIILFGADKAGIVAEAMGALRLKLGTDLELTDTSAWAPLWVVDFPMFEEDGEGNLHAMHHPFTSPLGVNAEELKANPAAANSDAYDMVINGYEVGGGSVRIHSAEMQTAVFGILGIEAKEQQEKFGFLLEALKYGTPPHAGLAFGLDRLAMLLCGTENIRDVIAFPKTTAAACLLTDAPSLANPASLEELAIAVKLAEKKEQA.

Glu-171 lines the L-aspartate pocket. The interval 195–198 (QLFK) is aspartate. L-aspartate is bound at residue Arg-217. ATP-binding positions include 217-219 (RDE) and Gln-226. An L-aspartate-binding site is contributed by His-448. Glu-482 is a binding site for ATP. Arg-489 contributes to the L-aspartate binding site. 534–537 (GLDR) is an ATP binding site.

Belongs to the class-II aminoacyl-tRNA synthetase family. Type 1 subfamily. Homodimer.

The protein resides in the cytoplasm. It catalyses the reaction tRNA(Asp) + L-aspartate + ATP = L-aspartyl-tRNA(Asp) + AMP + diphosphate. Its function is as follows. Catalyzes the attachment of L-aspartate to tRNA(Asp) in a two-step reaction: L-aspartate is first activated by ATP to form Asp-AMP and then transferred to the acceptor end of tRNA(Asp). The sequence is that of Aspartate--tRNA ligase from Vibrio atlanticus (strain LGP32) (Vibrio splendidus (strain Mel32)).